A 426-amino-acid polypeptide reads, in one-letter code: Transcriptional enhancer factor TEF-1 (426 aa).

At Met1 the chain carries N-acetylmethionine. Positions 1–12 (MEPSSWSGSESP) are enriched in polar residues. A disordered region spans residues 1 to 31 (MEPSSWSGSESPAENMERMSDSADKPIDNDA). At Ser11 the chain carries Phosphoserine. Basic and acidic residues predominate over residues 15–28 (NMERMSDSADKPID). The segment at residues 28–104 (DNDAEGVWSP…QVLARRKSRD (77 aa)) is a DNA-binding region (TEA). Lys108 bears the N6-lactoyllysine mark. Positions 167–426 (GSSQDVKPFV…QHHIYRLVKD (260 aa)) are transcriptional activation.

In terms of assembly, interacts with YAP1 and WWTR1/TAZ. Post-translationally, lactylation by AARS1 promotes nuclear localization and stabilization of YAP1, leading to increased Hippo signaling pathway. Delactylated by SIRT1. As to expression, in developing skeletal muscle and myocardium, in mitotic neuroblasts both in the brain and spinal cord. At later stages of embryogenesis expressed in several developing structures such as the olfactory system, the intestine, and the kidney.

It is found in the nucleus. Its function is as follows. Transcription factor which plays a key role in the Hippo signaling pathway, a pathway involved in organ size control and tumor suppression by restricting proliferation and promoting apoptosis. The core of this pathway is composed of a kinase cascade wherein MST1/MST2, in complex with its regulatory protein SAV1, phosphorylates and activates LATS1/2 in complex with its regulatory protein MOB1, which in turn phosphorylates and inactivates YAP1 oncoprotein and WWTR1/TAZ. Acts by mediating gene expression of YAP1 and WWTR1/TAZ, thereby regulating cell proliferation, migration and epithelial mesenchymal transition (EMT) induction. Binds specifically and cooperatively to the SPH and GT-IIC 'enhansons' (5'-GTGGAATGT-3') and activates transcription in vivo in a cell-specific manner. The activation function appears to be mediated by a limiting cell-specific transcriptional intermediary factor (TIF). Involved in cardiac development. Binds to the M-CAT motif. The protein is Transcriptional enhancer factor TEF-1 (Tead1) of Mus musculus (Mouse).